The sequence spans 701 residues: Vacuolar protein sorting-associated protein 52 B (701 aa).

2 coiled-coil regions span residues 23-45 and 511-533; these read FEEDSRSEDISLEGLQQELEECE and QLDINLERLRMAVDSLILKLAKL.

The protein belongs to the VPS52 family. In terms of assembly, component of the Golgi-associated retrograde protein (GARP) complex. In terms of tissue distribution, detected in pollen.

The protein localises to the golgi apparatus. The protein resides in the trans-Golgi network membrane. It localises to the endosome membrane. Its subcellular location is the golgi apparatus membrane. Its function is as follows. May be involved in retrograde transport of early and late endosomes to the late Golgi. This Arabidopsis thaliana (Mouse-ear cress) protein is Vacuolar protein sorting-associated protein 52 B (P2).